Here is a 486-residue protein sequence, read N- to C-terminus: MFEQSISTLAQKLRNKDISSVELTRLFLARIAKLDPQLNSFITVSEQHALEQAAAADVLLQSGKGTSLTGIPVAHKDLFCTEGTLTTCGSKMLHNFVPPYESTVTSRIQQAGAVMLGKTNMDEFAMGSSNENSFYGAVKNPWNLDMVPGGSSGGSAAAIAAGLAVAATGTDTGGSIRQPASFCGITGLKPTYGRVSRFGMIAYASSLDQGGPMAKSAEDCAHLMQAMAGFDEKDSTSADKPADDYLANLNSPLTGLKIGLPKEYFGEGLDSKVADVIMAAVKEFEKLGATVKEISLPNLQLSIPSYYVIAPSEASSNLSRFDGVRFGHRCDDPKDLLDMYTRSRAEGFGTEVQKRIMVGTYALSEGYYDAYYLKAQKIRRLIKEDFVKALEEVDVIMGPVAPTTAFGLGSKTSDPVAMYLEDIYTLSVNLAGIPAMSVPAGFADGMPVGLQVMGNYFAEAKLLNIAHQYQQHTDWHLQTPTMAKGA.

Catalysis depends on charge relay system residues Lys76 and Ser151. Residue Ser175 is the Acyl-ester intermediate of the active site.

The protein belongs to the amidase family. GatA subfamily. Heterotrimer of A, B and C subunits.

It catalyses the reaction L-glutamyl-tRNA(Gln) + L-glutamine + ATP + H2O = L-glutaminyl-tRNA(Gln) + L-glutamate + ADP + phosphate + H(+). Allows the formation of correctly charged Gln-tRNA(Gln) through the transamidation of misacylated Glu-tRNA(Gln) in organisms which lack glutaminyl-tRNA synthetase. The reaction takes place in the presence of glutamine and ATP through an activated gamma-phospho-Glu-tRNA(Gln). This chain is Glutamyl-tRNA(Gln) amidotransferase subunit A, found in Marinomonas sp. (strain MWYL1).